The chain runs to 392 residues: MSDSATTDSAGTGGERSASAPGDGTRAVRAGLPEPVKHEPTLPGPVFAAHFHLPGDPTGPYTYGRDENPTWTRLESAIGELEAPGEAGVETLVFASGMAAISSVLFSQLRAGDTAVLPDDGYQALPLVRAQLEAYGIEVRTAPTGRDAQLDVLDGAKLLWIETPSNPGLDVCDVRRLVEAAHAGGALVAVDNTLATPLGQRPLELGADFSVASGTKQLTGHGDVLLGYVAGRDAGAMAAVRRWRKIVGAIPGPMEAWLAHRSIATLQLRVDRQDSTALKVAEALRTRPEITGLRYPGLPDDPSHKVASQQMLRYGCVVSFTLPSRARADRFLDALRLVEGATSFGGVRSTAERRGRWGGDAVPEGFIRLSVGAEDPDDLVADLLRALDETTE.

Residues M1 to A10 are compositionally biased toward polar residues. The segment at M1–T41 is disordered. Residue K216 is modified to N6-(pyridoxal phosphate)lysine.

The protein belongs to the trans-sulfuration enzymes family. The cofactor is pyridoxal 5'-phosphate.

It localises to the cytoplasm. The catalysed reaction is L,L-cystathionine + H2O = 2-oxobutanoate + L-cysteine + NH4(+). It functions in the pathway amino-acid biosynthesis; L-cysteine biosynthesis; L-cysteine from L-homocysteine and L-serine: step 2/2. The protein is Putative cystathionine gamma-lyase (cysA) of Streptomyces coelicolor (strain ATCC BAA-471 / A3(2) / M145).